The sequence spans 102 residues: MYAIVKAGGHQEKVEVGDVILVNRLDAKKGDTVEFPVSLVVDGDKVTLAAADLAKVSVKAEVVNDEAKGPKIDIQKYKNKTGVARRKGHRQKLTIVKITAIA.

Belongs to the bacterial ribosomal protein bL21 family. Part of the 50S ribosomal subunit. Contacts protein L20.

Its function is as follows. This protein binds to 23S rRNA in the presence of protein L20. The chain is Large ribosomal subunit protein bL21 from Bifidobacterium longum subsp. infantis (strain ATCC 15697 / DSM 20088 / JCM 1222 / NCTC 11817 / S12).